The chain runs to 117 residues: Large ribosomal subunit protein bL31B (117 aa).

The disordered stretch occupies residues 75 to 117; sequence KRFERKKEASPADTPPESDSTTENASVEKKAEKKRVTAKGSKK. A compositionally biased stretch (basic and acidic residues) spans 100–109; that stretch reads SVEKKAEKKR.

It belongs to the bacterial ribosomal protein bL31 family. Type B subfamily. Part of the 50S ribosomal subunit.

The protein is Large ribosomal subunit protein bL31B of Protochlamydia amoebophila (strain UWE25).